A 239-amino-acid polypeptide reads, in one-letter code: tRNA (guanine-N(7)-)-methyltransferase (239 aa).

4 residues coordinate S-adenosyl-L-methionine: Glu-69, Glu-94, Asp-121, and Asp-144. Asp-144 is a catalytic residue. Substrate is bound at residue Lys-148. The interval 150–155 (RHNKRR) is interaction with RNA. Residues Asp-180 and 217-220 (TKFE) contribute to the substrate site.

It belongs to the class I-like SAM-binding methyltransferase superfamily. TrmB family. In terms of assembly, monomer.

It catalyses the reaction guanosine(46) in tRNA + S-adenosyl-L-methionine = N(7)-methylguanosine(46) in tRNA + S-adenosyl-L-homocysteine. It functions in the pathway tRNA modification; N(7)-methylguanine-tRNA biosynthesis. Catalyzes the formation of N(7)-methylguanine at position 46 (m7G46) in tRNA. This chain is tRNA (guanine-N(7)-)-methyltransferase, found in Salmonella typhimurium (strain LT2 / SGSC1412 / ATCC 700720).